A 1494-amino-acid chain; its full sequence is Ral GTPase-activating protein subunit beta (1494 aa).

2 disordered regions span residues 355–437 (PRSD…APRR) and 709–738 (ENNL…PDSE). Residue Ser-359 is modified to Phosphoserine. Thr-363 and Thr-379 each carry phosphothreonine. 3 stretches are compositionally biased toward polar residues: residues 369 to 381 (SMPQ…TTPP), 392 to 428 (NKAT…TSSE), and 711 to 735 (NLKS…PTTP). Phosphoserine occurs at positions 421 and 720. Position 734 is a phosphothreonine (Thr-734). Positions 1149 to 1392 (IGYLDLLPCR…TTLEKEVPVI (244 aa)) constitute a Rap-GAP domain. Phosphoserine is present on Ser-1285. A compositionally biased stretch (polar residues) spans 1312–1323 (NLNSSQRLSPSS). Residues 1312–1335 (NLNSSQRLSPSSRMRKLPQGRPVP) are disordered.

As to quaternary structure, component of the heterodimeric RalGAP1 complex with RALGAPA1 and of the heterodimeric RalGAP2 complex with RALGAPA2. Heterodimerization is required for activity. In terms of tissue distribution, highly expressed in brain, mostly in amygdala.

In terms of biological role, non-catalytic subunit of the heterodimeric RalGAP1 and RalGAP2 complexes which act as GTPase activators for the Ras-like small GTPases RALA and RALB. The polypeptide is Ral GTPase-activating protein subunit beta (RALGAPB) (Homo sapiens (Human)).